We begin with the raw amino-acid sequence, 200 residues long: Interleukin 17-like protein (200 aa).

The signal sequence occupies residues 1–26 (MGNFFLFAMTLVVCSVIVLLTGVADS). Asn46 carries N-linked (GlcNAc...) asparagine glycosylation. Intrachain disulfides connect Cys122/Cys175 and Cys127/Cys177. The N-linked (GlcNAc...) asparagine glycan is linked to Asn192.

It belongs to the IL-17 family. As to expression, expressed in several tissues including hemocytes, gills, mantle, adductor muscle, labial palps, digestive glands and heart with highest levels in gills and lowest levels in adductor muscle and heart.

It localises to the secreted. This is Interleukin 17-like protein from Magallana gigas (Pacific oyster).